A 173-amino-acid chain; its full sequence is Shikimate kinase (173 aa).

Residue 12-17 (GSGKTT) participates in ATP binding. Mg(2+) is bound at residue Thr-16. 3 residues coordinate substrate: Asp-34, Arg-58, and Gly-80. Arg-118 serves as a coordination point for ATP. Arg-136 lines the substrate pocket.

This sequence belongs to the shikimate kinase family. In terms of assembly, monomer. Mg(2+) serves as cofactor.

Its subcellular location is the cytoplasm. It carries out the reaction shikimate + ATP = 3-phosphoshikimate + ADP + H(+). It functions in the pathway metabolic intermediate biosynthesis; chorismate biosynthesis; chorismate from D-erythrose 4-phosphate and phosphoenolpyruvate: step 5/7. Its function is as follows. Catalyzes the specific phosphorylation of the 3-hydroxyl group of shikimic acid using ATP as a cosubstrate. The chain is Shikimate kinase from Moorella thermoacetica (strain ATCC 39073 / JCM 9320).